The following is a 346-amino-acid chain: N-acetyl-gamma-glutamyl-phosphate reductase (346 aa).

Cys-151 is a catalytic residue.

This sequence belongs to the NAGSA dehydrogenase family. Type 1 subfamily.

Its subcellular location is the cytoplasm. The catalysed reaction is N-acetyl-L-glutamate 5-semialdehyde + phosphate + NADP(+) = N-acetyl-L-glutamyl 5-phosphate + NADPH + H(+). It participates in amino-acid biosynthesis; L-arginine biosynthesis; N(2)-acetyl-L-ornithine from L-glutamate: step 3/4. Its function is as follows. Catalyzes the NADPH-dependent reduction of N-acetyl-5-glutamyl phosphate to yield N-acetyl-L-glutamate 5-semialdehyde. This chain is N-acetyl-gamma-glutamyl-phosphate reductase, found in Ehrlichia chaffeensis (strain ATCC CRL-10679 / Arkansas).